Reading from the N-terminus, the 285-residue chain is Bifunctional protein FolD (285 aa).

Residues 166–168 and Ile-232 contribute to the NADP(+) site; that span reads GAS.

It belongs to the tetrahydrofolate dehydrogenase/cyclohydrolase family. As to quaternary structure, homodimer.

The enzyme catalyses (6R)-5,10-methylene-5,6,7,8-tetrahydrofolate + NADP(+) = (6R)-5,10-methenyltetrahydrofolate + NADPH. The catalysed reaction is (6R)-5,10-methenyltetrahydrofolate + H2O = (6R)-10-formyltetrahydrofolate + H(+). It functions in the pathway one-carbon metabolism; tetrahydrofolate interconversion. Catalyzes the oxidation of 5,10-methylenetetrahydrofolate to 5,10-methenyltetrahydrofolate and then the hydrolysis of 5,10-methenyltetrahydrofolate to 10-formyltetrahydrofolate. In Psychromonas ingrahamii (strain DSM 17664 / CCUG 51855 / 37), this protein is Bifunctional protein FolD.